The sequence spans 208 residues: Uracil phosphoribosyltransferase (208 aa).

5-phospho-alpha-D-ribose 1-diphosphate is bound by residues Arg-78, Arg-103, and Asp-130 to Ser-138. Uracil-binding positions include Ile-193 and Gly-198–Ala-200. A 5-phospho-alpha-D-ribose 1-diphosphate-binding site is contributed by Asp-199.

This sequence belongs to the UPRTase family. The cofactor is Mg(2+).

It catalyses the reaction UMP + diphosphate = 5-phospho-alpha-D-ribose 1-diphosphate + uracil. The protein operates within pyrimidine metabolism; UMP biosynthesis via salvage pathway; UMP from uracil: step 1/1. With respect to regulation, allosterically activated by GTP. Its function is as follows. Catalyzes the conversion of uracil and 5-phospho-alpha-D-ribose 1-diphosphate (PRPP) to UMP and diphosphate. The protein is Uracil phosphoribosyltransferase of Thermosipho melanesiensis (strain DSM 12029 / CIP 104789 / BI429).